The primary structure comprises 367 residues: S-adenosylmethionine decarboxylase proenzyme 3 (367 aa).

Catalysis depends on residues Glu9 and Glu12. Ser69 acts as the Schiff-base intermediate with substrate; via pyruvic acid in catalysis. The residue at position 69 (Ser69) is a Pyruvic acid (Ser); by autocatalysis. Cys83 (proton donor; for catalytic activity) is an active-site residue. Catalysis depends on proton acceptor; for processing activity residues Ser234 and His247.

The protein belongs to the eukaryotic AdoMetDC family. Pyruvate is required as a cofactor. Is synthesized initially as an inactive proenzyme. Formation of the active enzyme involves a self-maturation process in which the active site pyruvoyl group is generated from an internal serine residue via an autocatalytic post-translational modification. Two non-identical subunits are generated from the proenzyme in this reaction, and the pyruvate is formed at the N-terminus of the alpha chain, which is derived from the carboxyl end of the proenzyme. The post-translation cleavage follows an unusual pathway, termed non-hydrolytic serinolysis, in which the side chain hydroxyl group of the serine supplies its oxygen atom to form the C-terminus of the beta chain, while the remainder of the serine residue undergoes an oxidative deamination to produce ammonia and the pyruvoyl group blocking the N-terminus of the alpha chain.

The enzyme catalyses S-adenosyl-L-methionine + H(+) = S-adenosyl 3-(methylsulfanyl)propylamine + CO2. It functions in the pathway amine and polyamine biosynthesis; S-adenosylmethioninamine biosynthesis; S-adenosylmethioninamine from S-adenosyl-L-methionine: step 1/1. The protein is S-adenosylmethionine decarboxylase proenzyme 3 (SAMDC3) of Brassica juncea (Indian mustard).